The primary structure comprises 476 residues: Bifunctional protein HldE (476 aa).

Residues 1 to 318 (MKPILPDYNN…AEAIHGSRDT (318 aa)) form a ribokinase region. 195 to 198 (NMSE) is a binding site for ATP. D264 is a catalytic residue. The segment at 344 to 476 (MTNGCFDILH…IIDAIKGGRG (133 aa)) is cytidylyltransferase.

This sequence in the N-terminal section; belongs to the carbohydrate kinase PfkB family. The protein in the C-terminal section; belongs to the cytidylyltransferase family. Homodimer.

It catalyses the reaction D-glycero-beta-D-manno-heptose 7-phosphate + ATP = D-glycero-beta-D-manno-heptose 1,7-bisphosphate + ADP + H(+). It carries out the reaction D-glycero-beta-D-manno-heptose 1-phosphate + ATP + H(+) = ADP-D-glycero-beta-D-manno-heptose + diphosphate. Its pathway is nucleotide-sugar biosynthesis; ADP-L-glycero-beta-D-manno-heptose biosynthesis; ADP-L-glycero-beta-D-manno-heptose from D-glycero-beta-D-manno-heptose 7-phosphate: step 1/4. It functions in the pathway nucleotide-sugar biosynthesis; ADP-L-glycero-beta-D-manno-heptose biosynthesis; ADP-L-glycero-beta-D-manno-heptose from D-glycero-beta-D-manno-heptose 7-phosphate: step 3/4. It participates in bacterial outer membrane biogenesis; LPS core biosynthesis. In terms of biological role, catalyzes the phosphorylation of D-glycero-D-manno-heptose 7-phosphate at the C-1 position to selectively form D-glycero-beta-D-manno-heptose-1,7-bisphosphate. Catalyzes the ADP transfer from ATP to D-glycero-beta-D-manno-heptose 1-phosphate, yielding ADP-D-glycero-beta-D-manno-heptose. The chain is Bifunctional protein HldE from Vibrio vulnificus (strain CMCP6).